We begin with the raw amino-acid sequence, 793 residues long: Phenylalanine--tRNA ligase beta subunit (793 aa).

The region spanning 39-148 (AAPFKGVKAA…EGDFPGVDLH (110 aa)) is the tRNA-binding domain. The 76-residue stretch at 401–476 (PPQATIILRK…RLYGYDRLPS (76 aa)) folds into the B5 domain. D454, D460, E463, and E464 together coordinate Mg(2+). Residues 699-792 (SKFPAIRRDI…LVTELGAIIR (94 aa)) enclose the FDX-ACB domain.

Belongs to the phenylalanyl-tRNA synthetase beta subunit family. Type 1 subfamily. Tetramer of two alpha and two beta subunits. The cofactor is Mg(2+).

The protein resides in the cytoplasm. It carries out the reaction tRNA(Phe) + L-phenylalanine + ATP = L-phenylalanyl-tRNA(Phe) + AMP + diphosphate + H(+). The chain is Phenylalanine--tRNA ligase beta subunit from Nitrosococcus oceani (strain ATCC 19707 / BCRC 17464 / JCM 30415 / NCIMB 11848 / C-107).